Consider the following 94-residue polypeptide: Small ribosomal subunit protein uS19c (94 aa).

The protein belongs to the universal ribosomal protein uS19 family.

The protein localises to the plastid. Its subcellular location is the chloroplast. Its function is as follows. Protein S19 forms a complex with S13 that binds strongly to the 16S ribosomal RNA. The chain is Small ribosomal subunit protein uS19c from Pleurastrum terricola (Filamentous green alga).